The following is a 95-amino-acid chain: MTKISSSDVRKVAQLARLELPEDQIETYTEQLEEILSYVDQLQEIDTENIPPTTRAVEVVNSMRDDLVEVNCSREDLLNQAPHREGDFFRVPKIL.

This sequence belongs to the GatC family. In terms of assembly, heterotrimer of A, B and C subunits.

It carries out the reaction L-glutamyl-tRNA(Gln) + L-glutamine + ATP + H2O = L-glutaminyl-tRNA(Gln) + L-glutamate + ADP + phosphate + H(+). The enzyme catalyses L-aspartyl-tRNA(Asn) + L-glutamine + ATP + H2O = L-asparaginyl-tRNA(Asn) + L-glutamate + ADP + phosphate + 2 H(+). Functionally, allows the formation of correctly charged Asn-tRNA(Asn) or Gln-tRNA(Gln) through the transamidation of misacylated Asp-tRNA(Asn) or Glu-tRNA(Gln) in organisms which lack either or both of asparaginyl-tRNA or glutaminyl-tRNA synthetases. The reaction takes place in the presence of glutamine and ATP through an activated phospho-Asp-tRNA(Asn) or phospho-Glu-tRNA(Gln). This is Aspartyl/glutamyl-tRNA(Asn/Gln) amidotransferase subunit C from Prochlorococcus marinus (strain NATL1A).